Consider the following 185-residue polypeptide: UPF0301 protein HCH_00550 (185 aa).

This sequence belongs to the UPF0301 (AlgH) family.

This chain is UPF0301 protein HCH_00550, found in Hahella chejuensis (strain KCTC 2396).